The chain runs to 213 residues: Glycerol-3-phosphate acyltransferase (213 aa).

The next 6 helical transmembrane spans lie at 2–22 (ITIV…GLWI), 54–74 (MATF…PIMF), 80–100 (SPLI…FAGF), 110–130 (AGVV…VFFG), 143–163 (VTAS…GFIL), and 165–185 (NYDP…IIRH).

Belongs to the PlsY family. In terms of assembly, probably interacts with PlsX.

The protein localises to the cell membrane. The catalysed reaction is an acyl phosphate + sn-glycerol 3-phosphate = a 1-acyl-sn-glycero-3-phosphate + phosphate. The protein operates within lipid metabolism; phospholipid metabolism. Functionally, catalyzes the transfer of an acyl group from acyl-phosphate (acyl-PO(4)) to glycerol-3-phosphate (G3P) to form lysophosphatidic acid (LPA). This enzyme utilizes acyl-phosphate as fatty acyl donor, but not acyl-CoA or acyl-ACP. This chain is Glycerol-3-phosphate acyltransferase, found in Streptococcus pneumoniae (strain Taiwan19F-14).